A 183-amino-acid chain; its full sequence is ATP synthase subunit delta (183 aa).

This sequence belongs to the ATPase delta chain family. F-type ATPases have 2 components, F(1) - the catalytic core - and F(0) - the membrane proton channel. F(1) has five subunits: alpha(3), beta(3), gamma(1), delta(1), epsilon(1). F(0) has three main subunits: a(1), b(2) and c(10-14). The alpha and beta chains form an alternating ring which encloses part of the gamma chain. F(1) is attached to F(0) by a central stalk formed by the gamma and epsilon chains, while a peripheral stalk is formed by the delta and b chains.

Its subcellular location is the cell inner membrane. F(1)F(0) ATP synthase produces ATP from ADP in the presence of a proton or sodium gradient. F-type ATPases consist of two structural domains, F(1) containing the extramembraneous catalytic core and F(0) containing the membrane proton channel, linked together by a central stalk and a peripheral stalk. During catalysis, ATP synthesis in the catalytic domain of F(1) is coupled via a rotary mechanism of the central stalk subunits to proton translocation. In terms of biological role, this protein is part of the stalk that links CF(0) to CF(1). It either transmits conformational changes from CF(0) to CF(1) or is implicated in proton conduction. This chain is ATP synthase subunit delta, found in Rickettsia prowazekii (strain Madrid E).